Here is a 77-residue protein sequence, read N- to C-terminus: Liver-expressed antimicrobial peptide 2 (77 aa).

Residues M1 to G22 form the signal peptide. Residues S23–R37 constitute a propeptide that is removed on maturation. 2 disulfides stabilise this stretch: C54/C65 and C60/C70.

It belongs to the LEAP2 family.

It localises to the secreted. Has an antimicrobial activity. The polypeptide is Liver-expressed antimicrobial peptide 2 (LEAP2) (Sus scrofa (Pig)).